The sequence spans 298 residues: Beta-1,3-galactosyltransferase 5 (298 aa).

The Cytoplasmic portion of the chain corresponds to 1 to 7; sequence MAFPKMR. A helical; Signal-anchor for type II membrane protein membrane pass occupies residues 8 to 28; that stretch reads LMYICLLVLGALCLYFSMYSL. Over 29 to 298 the chain is Lumenal; sequence NPFKEQSFVY…PRTLLDYWQA (270 aa). Asn-130, Asn-174, and Asn-231 each carry an N-linked (GlcNAc...) asparagine glycan.

The protein belongs to the glycosyltransferase 31 family.

The protein localises to the golgi apparatus membrane. The catalysed reaction is a globoside Gb4Cer (d18:1(4E)) + UDP-alpha-D-galactose = a globoside GalGb4Cer (d18:1(4E)) + UDP + H(+). It functions in the pathway protein modification; protein glycosylation. Functionally, catalyzes the transfer of Gal to GlcNAc-based acceptors with a preference for the core3 O-linked glycan GlcNAc(beta1,3)GalNAc structure. Can use glycolipid LC3Cer as an efficient acceptor. This is Beta-1,3-galactosyltransferase 5 (B3GALT5) from Gorilla gorilla gorilla (Western lowland gorilla).